Here is a 338-residue protein sequence, read N- to C-terminus: CDP-paratose 2-epimerase (338 aa).

Threonine 124 is a substrate binding site. Catalysis depends on tyrosine 164, which acts as the Proton acceptor.

It belongs to the NAD(P)-dependent epimerase/dehydratase family. Homotetramer. NAD(+) is required as a cofactor.

The catalysed reaction is CDP-alpha-D-paratose = CDP-3,6-dideoxy-alpha-D-mannose. It participates in nucleotide-sugar biosynthesis; CDP-3,6-dideoxy-D-mannose biosynthesis; CDP-3,6-dideoxy-D-mannose from CTP and alpha-D-glucose 1-phosphate: step 5/5. Functionally, catalyzes the isomeration of CDP-paratose to CDP-tyvelose. The chain is CDP-paratose 2-epimerase (rfbE) from Salmonella typhi.